The primary structure comprises 187 residues: Large ribosomal subunit protein bL17 (187 aa).

The disordered stretch occupies residues 122 to 187 (PKVRSSRTST…EADAAEKSDK (66 aa)). Residues 127–144 (SRTSTATAPAAAAPAAEA) are compositionally biased toward low complexity. 2 stretches are compositionally biased toward acidic residues: residues 145-157 (PAEE…EETD) and 165-180 (TPAE…VEAD).

This sequence belongs to the bacterial ribosomal protein bL17 family. As to quaternary structure, part of the 50S ribosomal subunit. Contacts protein L32.

The polypeptide is Large ribosomal subunit protein bL17 (Clavibacter michiganensis subsp. michiganensis (strain NCPPB 382)).